A 452-amino-acid chain; its full sequence is Glycylpeptide N-tetradecanoyltransferase (452 aa).

Residues 38–41 (YKFW), 171–173 (LCI), and 179–183 (SKRLA) each bind tetradecanoyl-CoA. Leucine 452 serves as the catalytic Proton acceptor; via carboxylate.

The protein belongs to the NMT family. In terms of assembly, monomer.

It is found in the cytoplasm. It carries out the reaction N-terminal glycyl-[protein] + tetradecanoyl-CoA = N-tetradecanoylglycyl-[protein] + CoA + H(+). Functionally, adds a myristoyl group to the N-terminal glycine residue of certain cellular proteins. The polypeptide is Glycylpeptide N-tetradecanoyltransferase (NMT1) (Eremothecium gossypii (strain ATCC 10895 / CBS 109.51 / FGSC 9923 / NRRL Y-1056) (Yeast)).